The sequence spans 280 residues: Glycoprotein G (280 aa).

An N-terminal signal peptide occupies residues Met-1–Ala-24. N-linked (GlcNAc...) asparagine; by host glycans are attached at residues Asn-85 and Asn-111. The disordered stretch occupies residues Glu-191 to Cys-218.

Belongs to the alphaherpesvirinae glycoprotein G family.

In Psittacid herpesvirus 1 (isolate Amazon parrot/-/97-0001/1997) (PsHV-1), this protein is Glycoprotein G (gG).